The primary structure comprises 97 residues: Aspartyl/glutamyl-tRNA(Asn/Gln) amidotransferase subunit C (97 aa).

Belongs to the GatC family. In terms of assembly, heterotrimer of A, B and C subunits.

It carries out the reaction L-glutamyl-tRNA(Gln) + L-glutamine + ATP + H2O = L-glutaminyl-tRNA(Gln) + L-glutamate + ADP + phosphate + H(+). The enzyme catalyses L-aspartyl-tRNA(Asn) + L-glutamine + ATP + H2O = L-asparaginyl-tRNA(Asn) + L-glutamate + ADP + phosphate + 2 H(+). Its function is as follows. Allows the formation of correctly charged Asn-tRNA(Asn) or Gln-tRNA(Gln) through the transamidation of misacylated Asp-tRNA(Asn) or Glu-tRNA(Gln) in organisms which lack either or both of asparaginyl-tRNA or glutaminyl-tRNA synthetases. The reaction takes place in the presence of glutamine and ATP through an activated phospho-Asp-tRNA(Asn) or phospho-Glu-tRNA(Gln). In Prochlorococcus marinus (strain SARG / CCMP1375 / SS120), this protein is Aspartyl/glutamyl-tRNA(Asn/Gln) amidotransferase subunit C.